The primary structure comprises 107 residues: EPIDERMAL PATTERNING FACTOR-like protein 3 (107 aa).

The first 24 residues, 1-24 (MEYMFLLMSKFFFVFPIIIYIGPA), serve as a signal peptide directing secretion. Cystine bridges form between C64–C102, C68–C74, and C71–C104.

It belongs to the plant cysteine rich small secretory peptide family. Epidermal patterning factor subfamily.

It is found in the secreted. In terms of biological role, controls stomatal patterning. In Arabidopsis thaliana (Mouse-ear cress), this protein is EPIDERMAL PATTERNING FACTOR-like protein 3.